Consider the following 1021-residue polypeptide: Probable LRR receptor-like serine/threonine-protein kinase RFK1 (1021 aa).

The signal sequence occupies residues 1–39 (MISLYQILAEKKKKKKNDLNIFAFSVFAIICFKFYSVNA). Over 41-625 (KLPQQEVDAL…PKTGMSPGAY (585 aa)) the chain is Extracellular. Asn-96 carries N-linked (GlcNAc...) asparagine glycosylation. LRR repeat units follow at residues 99-122 (DCHVVKFAFKDHNLPGTLPQIVKL) and 123-146 (PYLREIDLAYNYINGTLPREWASS). N-linked (GlcNAc...) asparagine glycosylation is found at Asn-136, Asn-147, and Asn-168. 5 LRR repeats span residues 148 to 168 (LTFISLLVNRLSGEIPKEFGN), 169 to 192 (SSLTYLDLESNAFSGTIPQELGNL), 193 to 216 (VHLKKLLLSSNKLTGTLPASLARL), 218 to 240 (NMTDFRINDLQLSGTIPSYIQNW), and 241 to 266 (KQLERLEMIASGLTGPIPSVISVLSN). N-linked (GlcNAc...) asparagine glycosylation occurs at Asn-218. N-linked (GlcNAc...) asparagine glycosylation is found at Asn-287 and Asn-300. LRR repeat units follow at residues 288 to 312 (VTGLTKIILKNCNISGQIPTYLSHL), 313 to 336 (KELETLDLSFNKLVGGIPSFAQAE), 338 to 359 (LRFIILAGNMLEGDAPDELLRD), and 361 to 381 (ITVDLSYNNLKWQSPESRACR). Residues Asn-486 and Asn-512 are each glycosylated (N-linked (GlcNAc...) asparagine). A helical membrane pass occupies residues 626–646 (IAIGIGAPCLIIFILGFLWIC). The Cytoplasmic segment spans residues 647–1021 (GCLPRCGRQR…QERKKEESRP (375 aa)). Thr-670 bears the Phosphothreonine mark. The Protein kinase domain maps to 681–956 (FNPTNKIGEG…EVVAMLEGLY (276 aa)). Residues 687 to 695 (IGEGGFGAV) and Lys-709 each bind ATP. A Phosphotyrosine modification is found at Tyr-754. Asp-807 acts as the Proton acceptor in catalysis. Ser-840 carries the phosphoserine modification. A phosphothreonine mark is found at Thr-841 and Thr-846. Tyr-854 is subject to Phosphotyrosine. The disordered stretch occupies residues 985–1021 (ENNSKTQCSVKSYPSSSSTSSGAGQAVQERKKEESRP). The segment covering 993–1005 (SVKSYPSSSSTSS) has biased composition (low complexity). Basic and acidic residues predominate over residues 1012 to 1021 (QERKKEESRP).

Belongs to the protein kinase superfamily. Ser/Thr protein kinase family. As to expression, mostly expressed in flower buds, especially in stamens.

Its subcellular location is the membrane. It carries out the reaction L-seryl-[protein] + ATP = O-phospho-L-seryl-[protein] + ADP + H(+). The enzyme catalyses L-threonyl-[protein] + ATP = O-phospho-L-threonyl-[protein] + ADP + H(+). This is Probable LRR receptor-like serine/threonine-protein kinase RFK1 (RKF1) from Arabidopsis thaliana (Mouse-ear cress).